The sequence spans 200 residues: Recombination protein RecR (200 aa).

The C4-type zinc-finger motif lies at 58-75 (CPLCFTLKESKEADCHFC). Residues 82 to 177 (QSLCIVASPK…NISRLALGLP (96 aa)) enclose the Toprim domain.

Belongs to the RecR family.

In terms of biological role, may play a role in DNA repair. It seems to be involved in an RecBC-independent recombinational process of DNA repair. It may act with RecF and RecO. This is Recombination protein RecR from Chlamydia pneumoniae (Chlamydophila pneumoniae).